Consider the following 904-residue polypeptide: Protein translocase subunit SecA (904 aa).

ATP contacts are provided by residues glutamine 89, 107–111 (GEGKT), and aspartate 496. A disordered region spans residues 870 to 904 (GGFQELSSGTPSPTVTVTTSSGGGTERKTSRRRKR). Over residues 876–889 (SSGTPSPTVTVTTS) the composition is skewed to low complexity.

The protein belongs to the SecA family. As to quaternary structure, monomer and homodimer. Part of the essential Sec protein translocation apparatus which comprises SecA, SecYEG and auxiliary proteins SecDF. Other proteins may also be involved.

The protein localises to the cell inner membrane. The protein resides in the cytoplasm. It catalyses the reaction ATP + H2O + cellular proteinSide 1 = ADP + phosphate + cellular proteinSide 2.. Part of the Sec protein translocase complex. Interacts with the SecYEG preprotein conducting channel. Has a central role in coupling the hydrolysis of ATP to the transfer of proteins into and across the cell membrane, serving as an ATP-driven molecular motor driving the stepwise translocation of polypeptide chains across the membrane. The protein is Protein translocase subunit SecA of Leptospira borgpetersenii serovar Hardjo-bovis (strain L550).